A 273-amino-acid chain; its full sequence is Dermonecrotic toxin LspaSicTox-alphaIA2i (273 aa).

Residue histidine 5 is part of the active site. Mg(2+) is bound by residues glutamate 25 and aspartate 27. Catalysis depends on histidine 41, which acts as the Nucleophile. Disulfide bonds link cysteine 45–cysteine 51 and cysteine 47–cysteine 190. Aspartate 85 contributes to the Mg(2+) binding site.

This sequence belongs to the arthropod phospholipase D family. Class II subfamily. Requires Mg(2+) as cofactor. As to expression, expressed by the venom gland.

It is found in the secreted. The catalysed reaction is an N-(acyl)-sphingosylphosphocholine = an N-(acyl)-sphingosyl-1,3-cyclic phosphate + choline. It carries out the reaction an N-(acyl)-sphingosylphosphoethanolamine = an N-(acyl)-sphingosyl-1,3-cyclic phosphate + ethanolamine. The enzyme catalyses a 1-acyl-sn-glycero-3-phosphocholine = a 1-acyl-sn-glycero-2,3-cyclic phosphate + choline. It catalyses the reaction a 1-acyl-sn-glycero-3-phosphoethanolamine = a 1-acyl-sn-glycero-2,3-cyclic phosphate + ethanolamine. In terms of biological role, dermonecrotic toxins cleave the phosphodiester linkage between the phosphate and headgroup of certain phospholipids (sphingolipid and lysolipid substrates), forming an alcohol (often choline) and a cyclic phosphate. This toxin acts on sphingomyelin (SM). It may also act on ceramide phosphoethanolamine (CPE), lysophosphatidylcholine (LPC) and lysophosphatidylethanolamine (LPE), but not on lysophosphatidylserine (LPS), and lysophosphatidylglycerol (LPG). It acts by transphosphatidylation, releasing exclusively cyclic phosphate products as second products. Induces dermonecrosis, hemolysis, increased vascular permeability, edema, inflammatory response, and platelet aggregation. The chain is Dermonecrotic toxin LspaSicTox-alphaIA2i from Loxosceles spadicea (Recluse spider).